Here is a 737-residue protein sequence, read N- to C-terminus: Zinc finger protein 184 (737 aa).

In terms of domain architecture, KRAB spans 28–99 (VTFKDVVVNF…DSCIPVGPLE (72 aa)). Phosphoserine is present on Ser-117. Residue Lys-185 forms a Glycyl lysine isopeptide (Lys-Gly) (interchain with G-Cter in SUMO2) linkage. C2H2-type zinc fingers lie at residues 201-223 (CKCN…QRTH), 229-251 (YKCN…QRIH), 257-279 (YKCD…QRIH), 285-307 (YKCD…QRIH), 313-335 (YTCT…QKIH), 341-363 (FKCE…QKIH), 369-391 (YKCN…HMIH), 397-419 (YECN…QKTH), 425-447 (YDCA…LKIH), 453-475 (YKCS…RRIH), 481-503 (FECS…QKTH), 509-531 (YECK…ERIH), 537-559 (YQCH…KKIH), 565-587 (YKCN…KRIH), 593-615 (YACP…QKTH), 621-643 (YQCN…QRIH), and 649-671 (YKCS…RSTH). Residues 677–698 (YNSECPQTFSQSTYLTQHQKIH) form a C2H2-type 18; degenerate zinc finger. The C2H2-type 19 zinc finger occupies 704 to 726 (LGCEDCEKAFQCHSALTKHQRLH).

It belongs to the krueppel C2H2-type zinc-finger protein family.

It localises to the nucleus. Functionally, may be involved in transcriptional regulation. This chain is Zinc finger protein 184 (Zfp184), found in Mus musculus (Mouse).